Here is a 67-residue protein sequence, read N- to C-terminus: Probable Sec-independent protein translocase protein TatE (67 aa).

A helical transmembrane segment spans residues 4–21 (ISITKLLVVAALVVLLFG).

The protein belongs to the TatA/E family. TatE subfamily.

Its subcellular location is the cell inner membrane. Functionally, part of the twin-arginine translocation (Tat) system that transports large folded proteins containing a characteristic twin-arginine motif in their signal peptide across membranes. TatE shares overlapping functions with TatA. In Salmonella dublin (strain CT_02021853), this protein is Probable Sec-independent protein translocase protein TatE.